A 737-amino-acid chain; its full sequence is Procollagen-lysine,2-oxoglutarate 5-dioxygenase 2 (737 aa).

The N-terminal stretch at 1–25 (MGDRGARPGRLMPMLALLSWAAGLG) is a signal peptide. N-linked (GlcNAc...) asparagine glycans are attached at residues Asn63 and Asn209. Thr320 is modified (phosphothreonine). Phosphotyrosine is present on Tyr323. 2 N-linked (GlcNAc...) asparagine glycosylation sites follow: Asn365 and Asn522. The Fe2OG dioxygenase domain maps to 644–737 (KGFALLNFVV…RYIAVSFIDP (94 aa)). Fe cation contacts are provided by His666 and Asp668. Asn696 carries an N-linked (GlcNAc...) asparagine glycan. Lys704 carries the N6-succinyllysine modification. Residue His718 participates in Fe cation binding. The N-linked (GlcNAc...) asparagine glycan is linked to Asn725. Arg728 is a catalytic residue.

Homodimer. It depends on Fe(2+) as a cofactor. Requires L-ascorbate as cofactor. In terms of tissue distribution, is highly expressed in the heart, lung, kidney, eye, ovary and placenta.

The protein resides in the rough endoplasmic reticulum membrane. The catalysed reaction is L-lysyl-[collagen] + 2-oxoglutarate + O2 = (5R)-5-hydroxy-L-lysyl-[collagen] + succinate + CO2. Forms hydroxylysine residues in -Xaa-Lys-Gly- sequences in collagens. These hydroxylysines serve as sites of attachment for carbohydrate units and are essential for the stability of the intermolecular collagen cross-links. This is Procollagen-lysine,2-oxoglutarate 5-dioxygenase 2 (Plod2) from Mus musculus (Mouse).